The following is a 1218-amino-acid chain: Formin-A (1218 aa).

In terms of domain architecture, C2 spans Met1 to Val108. A GBD/FH3 domain is found at Glu139–Gly539. The stretch at Leu563–Lys638 forms a coiled coil. The tract at residues Gln634–Val762 is disordered. The segment covering Ala649–Gly747 has biased composition (pro residues). The FH1 domain maps to Pro652 to Pro737. Residues Arg759–Leu1155 form the FH2 domain. Residues Ser1034–Ser1061 are a coiled coil. Disordered regions lie at residues Lys1153–Val1179 and Lys1198–Leu1218. Residues Gly1174–Gln1209 form the DAD domain.

This sequence belongs to the formin homology family. Diaphanous subfamily. Interacts (via GBD/FH3 domain) with activated Rho-GTPases.

Its function is as follows. Formins play an important role in the nucleation of actin and the formation of linear actin filaments. This chain is Formin-A (forA), found in Dictyostelium discoideum (Social amoeba).